The primary structure comprises 281 residues: Pantothenate synthetase (281 aa).

30–37 (MGNLHAGH) is a binding site for ATP. His-37 functions as the Proton donor in the catalytic mechanism. Gln-61 contacts (R)-pantoate. Gln-61 is a binding site for beta-alanine. An ATP-binding site is contributed by 149–152 (GRKD). Gln-155 provides a ligand contact to (R)-pantoate. ATP is bound by residues Val-178 and 186 to 189 (MSSR).

This sequence belongs to the pantothenate synthetase family. As to quaternary structure, homodimer.

It is found in the cytoplasm. It catalyses the reaction (R)-pantoate + beta-alanine + ATP = (R)-pantothenate + AMP + diphosphate + H(+). The protein operates within cofactor biosynthesis; (R)-pantothenate biosynthesis; (R)-pantothenate from (R)-pantoate and beta-alanine: step 1/1. Its function is as follows. Catalyzes the condensation of pantoate with beta-alanine in an ATP-dependent reaction via a pantoyl-adenylate intermediate. This chain is Pantothenate synthetase, found in Shewanella amazonensis (strain ATCC BAA-1098 / SB2B).